The primary structure comprises 304 residues: Sulfate adenylyltransferase subunit 2 1 (304 aa).

The protein belongs to the PAPS reductase family. CysD subfamily. Heterodimer composed of CysD, the smaller subunit, and CysN.

The catalysed reaction is sulfate + ATP + H(+) = adenosine 5'-phosphosulfate + diphosphate. Its pathway is sulfur metabolism; hydrogen sulfide biosynthesis; sulfite from sulfate: step 1/3. Its function is as follows. With CysN forms the ATP sulfurylase (ATPS) that catalyzes the adenylation of sulfate producing adenosine 5'-phosphosulfate (APS) and diphosphate, the first enzymatic step in sulfur assimilation pathway. APS synthesis involves the formation of a high-energy phosphoric-sulfuric acid anhydride bond driven by GTP hydrolysis by CysN coupled to ATP hydrolysis by CysD. The chain is Sulfate adenylyltransferase subunit 2 1 from Marinobacter nauticus (strain ATCC 700491 / DSM 11845 / VT8) (Marinobacter aquaeolei).